Consider the following 301-residue polypeptide: G-protein coupled receptor homolog U51 (301 aa).

The Extracellular segment spans residues 1–15 (MEKETKSLAWPATAE). A helical membrane pass occupies residues 16-36 (FYGWVFIFSSIQLCTVVFLTV). Residues 37-48 (RFNGFKVGREYA) lie on the Cytoplasmic side of the membrane. A helical membrane pass occupies residues 49–69 (VFTFAGMSFNCFLLPIKMGLL). Over 70-82 (SGHWTLPRDFCAI) the chain is Extracellular. The helical transmembrane segment at 83–103 (LLYIDDFSAYFSSWSLVFMAI) threads the bilayer. The Cytoplasmic portion of the chain corresponds to 104–122 (ERINYFCYSTPLLNENSKA). Residues 123–143 (LAKVCFPIVWVVSGVQALQML) form a helical membrane-spanning segment. The Extracellular portion of the chain corresponds to 144 to 168 (NNYKATALQNETGQCFLAFLRSGHD). N-linked (GlcNAc...) asparagine; by host glycosylation occurs at asparagine 153. A helical transmembrane segment spans residues 169–189 (MWLMLVYSVVIPVMLVFFYLY). The Cytoplasmic segment spans residues 190-199 (SKNFMLLKDE). A helical transmembrane segment spans residues 200-220 (LSSVTTYLCIYLLLGTIAHLP). Residues 221 to 238 (KAALSEIESDKIFYGLRD) are Extracellular-facing. Residues 239–259 (IFMALPVLKVYYISAMAYCMA) traverse the membrane as a helical segment. Residues 260–301 (CDDHTVPVRLCSIWLVNLCKKCFSCTRREKGSDLEVGIKMLK) lie on the Cytoplasmic side of the membrane.

The protein belongs to the G-protein coupled receptor 1 family.

Its subcellular location is the host cell membrane. The sequence is that of G-protein coupled receptor homolog U51 (U51) from Homo sapiens (Human).